The following is a 660-amino-acid chain: tRNA 5-methylaminomethyl-2-thiouridine biosynthesis bifunctional protein MnmC (660 aa).

Residues 1–242 (MTDRIVPATL…KRAMLVGEFA (242 aa)) form a tRNA (mnm(5)s(2)U34)-methyltransferase region. Residues 266 to 660 (IGAGLAGCAV…VRALRHGRVA (395 aa)) form an FAD-dependent cmnm(5)s(2)U34 oxidoreductase region.

This sequence in the N-terminal section; belongs to the methyltransferase superfamily. tRNA (mnm(5)s(2)U34)-methyltransferase family. In the C-terminal section; belongs to the DAO family. The cofactor is FAD.

It localises to the cytoplasm. The catalysed reaction is 5-aminomethyl-2-thiouridine(34) in tRNA + S-adenosyl-L-methionine = 5-methylaminomethyl-2-thiouridine(34) in tRNA + S-adenosyl-L-homocysteine + H(+). Catalyzes the last two steps in the biosynthesis of 5-methylaminomethyl-2-thiouridine (mnm(5)s(2)U) at the wobble position (U34) in tRNA. Catalyzes the FAD-dependent demodification of cmnm(5)s(2)U34 to nm(5)s(2)U34, followed by the transfer of a methyl group from S-adenosyl-L-methionine to nm(5)s(2)U34, to form mnm(5)s(2)U34. The chain is tRNA 5-methylaminomethyl-2-thiouridine biosynthesis bifunctional protein MnmC from Burkholderia pseudomallei (strain 1710b).